The sequence spans 215 residues: Octanoyltransferase (215 aa).

Positions 31-206 (PDSQDEIWLV…QLVKHLDYAE (176 aa)) constitute a BPL/LPL catalytic domain. Residues 70-77 (RGGQVTYH), 137-139 (SLG), and 150-152 (GLA) each bind substrate. Residue C168 is the Acyl-thioester intermediate of the active site.

The protein belongs to the LipB family.

It localises to the cytoplasm. It catalyses the reaction octanoyl-[ACP] + L-lysyl-[protein] = N(6)-octanoyl-L-lysyl-[protein] + holo-[ACP] + H(+). Its pathway is protein modification; protein lipoylation via endogenous pathway; protein N(6)-(lipoyl)lysine from octanoyl-[acyl-carrier-protein]: step 1/2. Functionally, catalyzes the transfer of endogenously produced octanoic acid from octanoyl-acyl-carrier-protein onto the lipoyl domains of lipoate-dependent enzymes. Lipoyl-ACP can also act as a substrate although octanoyl-ACP is likely to be the physiological substrate. This chain is Octanoyltransferase, found in Pseudomonas putida (strain GB-1).